We begin with the raw amino-acid sequence, 288 residues long: N-glycosylase/DNA lyase (288 aa).

Residues glutamine 35, serine 62, and tryptophan 73 each contribute to the 8-oxoguanine site. The tract at residues 134 to 203 (NPLVLVERPS…VACASISSEM (70 aa)) is helix-hairpin-helix. The Schiff-base intermediate with DNA role is filled by lysine 160. Positions 164 and 189 each coordinate 8-oxoguanine. The active site involves aspartate 191. Residues aspartate 238 and tryptophan 242 each coordinate 8-oxoguanine.

This sequence belongs to the archaeal N-glycosylase/DNA lyase (AGOG) family.

It catalyses the reaction 2'-deoxyribonucleotide-(2'-deoxyribose 5'-phosphate)-2'-deoxyribonucleotide-DNA = a 3'-end 2'-deoxyribonucleotide-(2,3-dehydro-2,3-deoxyribose 5'-phosphate)-DNA + a 5'-end 5'-phospho-2'-deoxyribonucleoside-DNA + H(+). In terms of biological role, DNA repair enzyme that is part of the base excision repair (BER) pathway; protects from oxidative damage by removing the major product of DNA oxidation, 8-oxoguanine (GO), from single- and double-stranded DNA substrates. The sequence is that of N-glycosylase/DNA lyase from Aeropyrum pernix (strain ATCC 700893 / DSM 11879 / JCM 9820 / NBRC 100138 / K1).